Reading from the N-terminus, the 178-residue chain is uncharacterized protein (178 aa).

The span at 1-13 (MEVASSSSACQFD) shows a compositional bias: polar residues. Disordered stretches follow at residues 1-24 (MEVASSSSACQFDNLNNNNNELKP) and 47-114 (WPSR…KKEK).

This is an uncharacterized protein from Caenorhabditis elegans.